A 1002-amino-acid chain; its full sequence is BTB/POZ domain-containing protein At1g04390 (1002 aa).

2 BTB domains span residues 680–758 and 808–889; these read SDMR…EVES and SDVI…PKPP.

It functions in the pathway protein modification; protein ubiquitination. May act as a substrate-specific adapter of an E3 ubiquitin-protein ligase complex (CUL3-RBX1-BTB) which mediates the ubiquitination and subsequent proteasomal degradation of target proteins. This chain is BTB/POZ domain-containing protein At1g04390, found in Arabidopsis thaliana (Mouse-ear cress).